We begin with the raw amino-acid sequence, 133 residues long: UPF0047 protein Rv2556c (133 aa).

The protein belongs to the UPF0047 family.

The polypeptide is UPF0047 protein Rv2556c (Mycobacterium tuberculosis (strain ATCC 25618 / H37Rv)).